The primary structure comprises 347 residues: Photosystem II protein D1 (347 aa).

Helical transmembrane passes span 31–48, 120–135, and 144–158; these read YIGW…LAII, HFIG…EWEF, and WIYL…AATA. His-120 is a chlorophyll a binding site. Trp-128 provides a ligand contact to pheophytin a. [CaMn4O5] cluster is bound by residues Asp-172 and Glu-191. Residues 199–220 traverse the membrane as a helical segment; the sequence is FHILGVAGVFGGSLFSAMHGSL. Chlorophyll a is bound at residue His-200. A quinone contacts are provided by residues His-217 and 266-267; that span reads SF. His-217 serves as a coordination point for Fe cation. Residue His-274 coordinates Fe cation. A helical transmembrane segment spans residues 276-290; that stretch reads FLAAWPVIGIWFTAL. The [CaMn4O5] cluster site is built by His-334, Glu-335, and Asp-344.

It belongs to the reaction center PufL/M/PsbA/D family. As to quaternary structure, PSII is composed of 1 copy each of membrane proteins PsbA, PsbB, PsbC, PsbD, PsbE, PsbF, PsbH, PsbI, PsbJ, PsbK, PsbL, PsbM, PsbT, PsbX, PsbY, PsbZ, Psb30/Ycf12, at least 3 peripheral proteins of the oxygen-evolving complex and a large number of cofactors. It forms dimeric complexes. Requires The D1/D2 heterodimer binds P680, chlorophylls that are the primary electron donor of PSII, and subsequent electron acceptors. It shares a non-heme iron and each subunit binds pheophytin, quinone, additional chlorophylls, carotenoids and lipids. D1 provides most of the ligands for the Mn4-Ca-O5 cluster of the oxygen-evolving complex (OEC). There is also a Cl(-1) ion associated with D1 and D2, which is required for oxygen evolution. The PSII complex binds additional chlorophylls, carotenoids and specific lipids. as cofactor. In terms of processing, tyr-163 forms a radical intermediate that is referred to as redox-active TyrZ, YZ or Y-Z.

It is found in the plastid. It localises to the chloroplast thylakoid membrane. It catalyses the reaction 2 a plastoquinone + 4 hnu + 2 H2O = 2 a plastoquinol + O2. In terms of biological role, photosystem II (PSII) is a light-driven water:plastoquinone oxidoreductase that uses light energy to abstract electrons from H(2)O, generating O(2) and a proton gradient subsequently used for ATP formation. It consists of a core antenna complex that captures photons, and an electron transfer chain that converts photonic excitation into a charge separation. The D1/D2 (PsbA/PsbD) reaction center heterodimer binds P680, the primary electron donor of PSII as well as several subsequent electron acceptors. This Alexandrium tamarense (Red tide dinoflagellate) protein is Photosystem II protein D1.